A 255-amino-acid polypeptide reads, in one-letter code: Aliphatic sulfonates import ATP-binding protein SsuB (255 aa).

In terms of domain architecture, ABC transporter spans 5-231 (IRVNEKAFGK…PRSRTSPVFQ (227 aa)). ATP is bound at residue 39-46 (GPSGCGKS).

It belongs to the ABC transporter superfamily. Aliphatic sulfonates importer (TC 3.A.1.17.2) family. In terms of assembly, the complex is composed of two ATP-binding proteins (SsuB), two transmembrane proteins (SsuC) and a solute-binding protein (SsuA).

It localises to the cell membrane. The enzyme catalyses ATP + H2O + aliphatic sulfonate-[sulfonate-binding protein]Side 1 = ADP + phosphate + aliphatic sulfonateSide 2 + [sulfonate-binding protein]Side 1.. Part of the ABC transporter complex SsuABC involved in aliphatic sulfonates import. Responsible for energy coupling to the transport system. The polypeptide is Aliphatic sulfonates import ATP-binding protein SsuB (Bacillus licheniformis (strain ATCC 14580 / DSM 13 / JCM 2505 / CCUG 7422 / NBRC 12200 / NCIMB 9375 / NCTC 10341 / NRRL NRS-1264 / Gibson 46)).